A 175-amino-acid polypeptide reads, in one-letter code: Anterior gradient protein 2 homolog (175 aa).

An N-terminal signal peptide occupies residues 1–20; it reads MEKFSVSAILLLVAISGTLA. A required to promote cell adhesion region spans residues 21-40; that stretch reads KDTTVKSGAKKDPKDSRPKL. Residues 24–44 are disordered; sequence TVKSGAKKDPKDSRPKLPQTL. Positions 29–38 are enriched in basic and acidic residues; sequence AKKDPKDSRP. 2 short sequence motifs (homodimer stabilization; interchain) span residues 45–54 and 60–67; these read SRGWGDQLIW and EALYRSKT.

Belongs to the AGR family. In terms of assembly, monomer and homodimer. Interacts with LYPD3 and DAG1 (alphaDAG1). Interacts with MUC2; disulfide-linked. As to expression, expressed in lung, skeletal muscle, testis, liver, stomach, colon, small intestine, the goblet cells of the intestine and the mucuous neck cells of the stomach.

The protein localises to the secreted. Its subcellular location is the endoplasmic reticulum. Functionally, required for MUC2 post-transcriptional synthesis and secretion. May play a role in the production of mucus by intestinal cells. Proto-oncogene that may play a role in cell migration, cell differentiation and cell growth. Promotes cell adhesion. The sequence is that of Anterior gradient protein 2 homolog (Agr2) from Mus musculus (Mouse).